Consider the following 373-residue polypeptide: MVSPGLDLELSFSQALQGFGLSEQAARLLWLPLPMLLVLVAAVVGVLVSVWLERKISAAVQQRIGPEYAGALGVLQPLADGLKLLVKEDIIPARADSLLFTLGPVLVVIPVIISWLIIPFGQNLLISNVGVGIFLWIAFSSIQPIGLLMSGYASNNKYSLLGGLRAAAQSISYEIPLALAVLAIVMMSNSLSTVDIVGQQTGAGILSWNIWRQPVGFLIFWICALAECERLPFDLPEAEEELVAGYQTEYAGMKFALFYLAGYINLVLSAVLVSVLYLGGWGFPIPVEWLAGWLNQPIDAPVIQVITGSVGIVMTVLKAYLLVFVAILLRWTTPRVRIDQLLDLGWKFLLPLSLVNLLVTAALKLAFPVAFGG.

Helical transmembrane passes span 28–48, 98–118, 129–149, 167–187, 205–225, 267–287, 309–329, and 348–368; these read LLWLPLPMLLVLVAAVVGVLV, LLFTLGPVLVVIPVIISWLII, VGVGIFLWIAFSSIQPIGLLM, AAQSISYEIPLALAVLAIVMM, ILSWNIWRQPVGFLIFWICAL, VLSAVLVSVLYLGGWGFPIPV, SVGIVMTVLKAYLLVFVAILL, and FLLPLSLVNLLVTAALKLAFP.

The protein belongs to the complex I subunit 1 family. As to quaternary structure, NDH-1 is composed of at least 11 different subunits.

The protein localises to the cellular thylakoid membrane. The catalysed reaction is a plastoquinone + NADH + (n+1) H(+)(in) = a plastoquinol + NAD(+) + n H(+)(out). It carries out the reaction a plastoquinone + NADPH + (n+1) H(+)(in) = a plastoquinol + NADP(+) + n H(+)(out). In terms of biological role, NDH-1 shuttles electrons from an unknown electron donor, via FMN and iron-sulfur (Fe-S) centers, to quinones in the respiratory and/or the photosynthetic chain. The immediate electron acceptor for the enzyme in this species is believed to be plastoquinone. Couples the redox reaction to proton translocation, and thus conserves the redox energy in a proton gradient. The polypeptide is NAD(P)H-quinone oxidoreductase subunit 1 (Parasynechococcus marenigrum (strain WH8102)).